Reading from the N-terminus, the 201-residue chain is Orotate phosphoribosyltransferase (201 aa).

Residues K90 and 113-121 each bind 5-phospho-alpha-D-ribose 1-diphosphate; that span reads EDIITTGGS. Residues T117 and R145 each contribute to the orotate site.

The protein belongs to the purine/pyrimidine phosphoribosyltransferase family. PyrE subfamily. As to quaternary structure, homodimer. It depends on Mg(2+) as a cofactor.

It catalyses the reaction orotidine 5'-phosphate + diphosphate = orotate + 5-phospho-alpha-D-ribose 1-diphosphate. Its pathway is pyrimidine metabolism; UMP biosynthesis via de novo pathway; UMP from orotate: step 1/2. Its function is as follows. Catalyzes the transfer of a ribosyl phosphate group from 5-phosphoribose 1-diphosphate to orotate, leading to the formation of orotidine monophosphate (OMP). The sequence is that of Orotate phosphoribosyltransferase from Sulfurovum sp. (strain NBC37-1).